Consider the following 205-residue polypeptide: MSKKRGLSGEEKRTRMMEIFFETKDVFQLKDLEKLAPKEKGITAMSVKEVLQSLVDDGMVDCERIGTSNYYWAFPSKALHARKRKLEALNSQLSEGSQKHADLQKSIEKARVGRQETEERAMLAKELSSFRDQRQQLKAEVEKYRECDPQVVEEIREANKVAKEAANRWTDNIFAIKSWAKRKFGFEESKIDKNFGIPEDFDYID.

Ser2 is subject to N-acetylserine. Positions 83 to 173 form a coiled coil; that stretch reads KRKLEALNSQ…EAANRWTDNI (91 aa).

Belongs to the MND1 family. In terms of assembly, heterodimer with PSMC3IP/HOP2. MND1-PSMC3IP interacts with DMC1 and RAD51 and binds to ssDNA and dsDNA showing no preference for either form of DNA.

Its subcellular location is the nucleus. Functionally, required for proper homologous chromosome pairing and efficient cross-over and intragenic recombination during meiosis. Stimulates both DMC1- and RAD51-mediated homologous strand assimilation, which is required for the resolution of meiotic double-strand breaks. The polypeptide is Meiotic nuclear division protein 1 homolog (Mus musculus (Mouse)).